Here is a 219-residue protein sequence, read N- to C-terminus: Adenylate kinase (219 aa).

An ATP-binding site is contributed by 10 to 15 (GAGKGT). The interval 30–59 (STGDMLRAAIREGTELGLKAKSVMESGGLV) is NMP. Residues threonine 31, arginine 36, 57-59 (GLV), 85-88 (GFPR), and glutamine 92 each bind AMP. Positions 122–159 (GRRQHPASGRVYHIEYNPPKVEGKDDVTGEELVQRPDD) are LID. Residues arginine 123 and 132 to 133 (VY) each bind ATP. Arginine 156 and arginine 167 together coordinate AMP. Arginine 202 provides a ligand contact to ATP.

The protein belongs to the adenylate kinase family. As to quaternary structure, monomer.

It is found in the cytoplasm. It carries out the reaction AMP + ATP = 2 ADP. Its pathway is purine metabolism; AMP biosynthesis via salvage pathway; AMP from ADP: step 1/1. Functionally, catalyzes the reversible transfer of the terminal phosphate group between ATP and AMP. Plays an important role in cellular energy homeostasis and in adenine nucleotide metabolism. The protein is Adenylate kinase of Acinetobacter baylyi (strain ATCC 33305 / BD413 / ADP1).